The sequence spans 234 residues: Ubiquinone biosynthesis O-methyltransferase (234 aa).

The S-adenosyl-L-methionine site is built by R36, G56, D77, and M125.

Belongs to the methyltransferase superfamily. UbiG/COQ3 family.

The catalysed reaction is a 3-demethylubiquinol + S-adenosyl-L-methionine = a ubiquinol + S-adenosyl-L-homocysteine + H(+). It catalyses the reaction a 3-(all-trans-polyprenyl)benzene-1,2-diol + S-adenosyl-L-methionine = a 2-methoxy-6-(all-trans-polyprenyl)phenol + S-adenosyl-L-homocysteine + H(+). The protein operates within cofactor biosynthesis; ubiquinone biosynthesis. Functionally, O-methyltransferase that catalyzes the 2 O-methylation steps in the ubiquinone biosynthetic pathway. The polypeptide is Ubiquinone biosynthesis O-methyltransferase (Actinobacillus pleuropneumoniae serotype 7 (strain AP76)).